The sequence spans 307 residues: Protein PROCA1 (307 aa).

Disordered stretches follow at residues 134–155 and 183–307; these read NHLS…EVPD and RKEK…PNLS. Residues 200 to 214 are compositionally biased toward basic residues; that stretch reads LKKKAKGKLTKKKTP. Polar residues predominate over residues 216 to 228; the sequence is KSESSPADLSQSV. Position 220 is a phosphoserine (serine 220). Over residues 235-248 the composition is skewed to low complexity; it reads PESSPESPGGLESE. Serine 250, serine 259, serine 260, serine 298, and serine 307 each carry phosphoserine. Positions 250–260 are enriched in basic and acidic residues; sequence SCERGKERPSS.

This sequence belongs to the PROCA1 family.

This chain is Protein PROCA1 (Proca1), found in Mus musculus (Mouse).